The chain runs to 300 residues: tRNA pseudouridine synthase B (300 aa).

Asp-44 acts as the Nucleophile in catalysis.

Belongs to the pseudouridine synthase TruB family. Type 1 subfamily.

The catalysed reaction is uridine(55) in tRNA = pseudouridine(55) in tRNA. In terms of biological role, responsible for synthesis of pseudouridine from uracil-55 in the psi GC loop of transfer RNAs. The sequence is that of tRNA pseudouridine synthase B from Corynebacterium diphtheriae (strain ATCC 700971 / NCTC 13129 / Biotype gravis).